The primary structure comprises 150 residues: Large ribosomal subunit protein uL13 (150 aa).

The disordered stretch occupies residues 130–150; sequence EHPHAAQQPKTLQLDPAASAQ.

The protein belongs to the universal ribosomal protein uL13 family. Part of the 50S ribosomal subunit.

Functionally, this protein is one of the early assembly proteins of the 50S ribosomal subunit, although it is not seen to bind rRNA by itself. It is important during the early stages of 50S assembly. This is Large ribosomal subunit protein uL13 from Synechococcus sp. (strain CC9311).